The following is a 252-amino-acid chain: MEDKSLVTLKKKTFEVSKFSNLGAIELFVDGRRKRPKYFHRRRETVLNHVGGKKSEHKLDVFDQRDYKMIKSYAFLKIVGVQLVVTSHLPADTPGFIQIDLLDSRLTEKRKRGKTIQRFKARACDNCSVAQYKVEYSISTQENVLDVWKVGCISEGVPVCDGTYPFSIEVSLIWVATDSTRRLNVEELNSSDYIEGDFTDQEVFGEFMSLKQVEMKTIEAKYDGPYRPATTRPKSLLSSEDVKRASNKKNSS.

The disordered stretch occupies residues 222-252 (YDGPYRPATTRPKSLLSSEDVKRASNKKNSS).

Belongs to the tobamovirus movement protein family.

In terms of biological role, transports viral genome to neighboring plant cells directly through plasmosdesmata, without any budding. The movement protein allows efficient cell to cell propagation, by bypassing the host cell wall barrier. Displays RNA-binding activity. The sequence is that of Movement protein from Bidens pilosa (Hairy beggarticks).